The primary structure comprises 602 residues: Elongation factor 4 (602 aa).

The tr-type G domain occupies 6–188 (DHIRNFSIVA…AIVTQLPAPK (183 aa)). GTP contacts are provided by residues 18 to 23 (DHGKST) and 135 to 138 (NKID).

Belongs to the TRAFAC class translation factor GTPase superfamily. Classic translation factor GTPase family. LepA subfamily.

The protein localises to the cell inner membrane. It carries out the reaction GTP + H2O = GDP + phosphate + H(+). In terms of biological role, required for accurate and efficient protein synthesis under certain stress conditions. May act as a fidelity factor of the translation reaction, by catalyzing a one-codon backward translocation of tRNAs on improperly translocated ribosomes. Back-translocation proceeds from a post-translocation (POST) complex to a pre-translocation (PRE) complex, thus giving elongation factor G a second chance to translocate the tRNAs correctly. Binds to ribosomes in a GTP-dependent manner. The polypeptide is Elongation factor 4 (Brucella anthropi (strain ATCC 49188 / DSM 6882 / CCUG 24695 / JCM 21032 / LMG 3331 / NBRC 15819 / NCTC 12168 / Alc 37) (Ochrobactrum anthropi)).